The primary structure comprises 205 residues: MCKGLAGLPASCLRSAKDMKHRLGFLLQKSDSCEHNSSHSKKDKVVICQRVSHEEVKKWAESLENLISHECGLAAFKAFLKSEYSEENIDFWISCEEYKKIKSPSKLSPKAKKIYNEFISVQATKEVNLDSCTREETSRNMLEPTITCFDEAQRKIFNLMEKDSYRRFLKSRFYLDLVNLSSCGSEKQKGAKSSTDCASLVPQCA.

S-palmitoyl cysteine attachment occurs at residues C2, C12, and C95. The region spanning 62 to 178 (SLENLISHEC…LKSRFYLDLV (117 aa)) is the RGS domain.

Palmitoylated on Cys-2 and/or Cys-12. Post-translationally, phosphorylated by cyclic GMP-dependent protein kinase.

Functionally, inhibits signal transduction by increasing the GTPase activity of G protein alpha subunits thereby driving them into their inactive GDP-bound form. Activity on G(z)-alpha is inhibited by phosphorylation of the G-protein. Activity on G(z)-alpha and G(i)-alpha-1 is inhibited by palmitoylation of the G-protein. This Bos taurus (Bovine) protein is Regulator of G-protein signaling 4 (RGS4).